We begin with the raw amino-acid sequence, 199 residues long: Imidazoleglycerol-phosphate dehydratase (199 aa).

The protein belongs to the imidazoleglycerol-phosphate dehydratase family.

It is found in the cytoplasm. It catalyses the reaction D-erythro-1-(imidazol-4-yl)glycerol 3-phosphate = 3-(imidazol-4-yl)-2-oxopropyl phosphate + H2O. Its pathway is amino-acid biosynthesis; L-histidine biosynthesis; L-histidine from 5-phospho-alpha-D-ribose 1-diphosphate: step 6/9. The sequence is that of Imidazoleglycerol-phosphate dehydratase from Paramagnetospirillum magneticum (strain ATCC 700264 / AMB-1) (Magnetospirillum magneticum).